Here is a 449-residue protein sequence, read N- to C-terminus: MATDAKRLKTEGSDPLQSFLQWCEGVGLKLNNKVYISKEGTVAEYGMLAKEDIDEGELLFTIPRMALLHQGTTKVLAVLEEGKASLENTSGWVPLLLALMYEYTSPQSHWRPYLSLWSDFTALDHPMFWSKDERDRLLKGTGIPEAVDTDLTNIQKEYKDIVLPFITLHPDLWDPERHTLDLYRSLVAFVMAYSFQEPLDEEDEDEKDPNPPMMVPIADMLNHVSNHNANLEYTPECLKMVSVRSIRKGEEVFNTYGQMANWQLLHMYGLXEPYQSNSNDTADIPMSNVYKAAVQVTRSEAEQRLLVEKWSLLCEMEMVGDKGVFIFGKSGSLTDTEMYTTLKILCMSVEEFEDFRENEGWEEADDDEEKMLQALSNEGLPSLPPVWRCLVHAAARFTLDSYGEDMLKDKVLLEDKDGYAKLSSRQRRALQVRYGQKTILHQLLELTKP.

Positions 32 to 257 (NKVYISKEGT…KGEEVFNTYG (226 aa)) constitute an SET domain.

Belongs to the class V-like SAM-binding methyltransferase superfamily. Histone-lysine methyltransferase family. SETD6 subfamily.

The protein localises to the nucleus. Its function is as follows. Protein-lysine N-methyltransferase. The sequence is that of N-lysine methyltransferase setd6 (setd6) from Salmo salar (Atlantic salmon).